The sequence spans 507 residues: ATP-dependent RNA helicase DDX47 (507 aa).

Residues 1–31 are compositionally biased toward acidic residues; it reads MSETSEDEQTQLQTSDEEEDLGSEEEQEDED. A disordered region spans residues 1–58; the sequence is MSETSEDEQTQLQTSDEEEDLGSEEEQEDEDNNHKEGDSEAALSGEDDKGSEDDAAEE. The Q motif signature appears at 61-89; the sequence is LTWKDLGLNEALCQACDELKWKAPSKIQR. The 172-residue stretch at 92 to 263 folds into the Helicase ATP-binding domain; it reads IPVALQGKDV…RASLKDPVKV (172 aa). Position 105-112 (105-112) interacts with ATP; the sequence is AETGSGKT. The DEAD box motif lies at 211–214; it reads DEAD. The Helicase C-terminal domain occupies 290–434; it reads YLVHILNELA…LYKCEEDEVM (145 aa). Residues 426–453 adopt a coiled-coil conformation; the sequence is YKCEEDEVMALQERVAEAQRTAKLELKD. Residues 451–471 are compositionally biased toward basic and acidic residues; it reads LKDLEDTRGGHKRGGDTHDDS. Residues 451-507 form a disordered region; sequence LKDLEDTRGGHKRGGDTHDDSENFTGARKRMKPMGGTGGGGRKSFGKKNWSKGKQKR. A compositionally biased stretch (basic residues) spans 494 to 507; it reads SFGKKNWSKGKQKR.

It belongs to the DEAD box helicase family. DDX47/RRP3 subfamily.

The protein resides in the nucleus. The protein localises to the nucleolus. It catalyses the reaction ATP + H2O = ADP + phosphate + H(+). Functionally, part of a translational control module, also containing ath/DHX33 and ais/DDX52, which coordinates germline stem cell differentiation with ribosome biogenesis during oogenesis. This module allows for coregulation of ribosomal proteins and non1/GTPBP4, a p53 repressor, preventing p53 stabilization, cell cycle arrest and loss of stem cell differentiation. With atos, adjusts transcription and translation of a subset of OXPHOS genes in macrophages to increase mitochondrial bioenergetics and allow tissue invasion. The polypeptide is ATP-dependent RNA helicase DDX47 (Drosophila melanogaster (Fruit fly)).